Reading from the N-terminus, the 328-residue chain is Malate dehydrogenase (328 aa).

G13–A19 is an NAD(+) binding site. 2 residues coordinate substrate: R94 and R100. Residues N107, Q114, and V131 to N133 contribute to the NAD(+) site. Substrate-binding residues include N133 and R164. H189 functions as the Proton acceptor in the catalytic mechanism.

Belongs to the LDH/MDH superfamily. MDH type 2 family.

It catalyses the reaction (S)-malate + NAD(+) = oxaloacetate + NADH + H(+). Functionally, catalyzes the reversible oxidation of malate to oxaloacetate. The chain is Malate dehydrogenase from Chlamydia felis (strain Fe/C-56) (Chlamydophila felis).